Here is a 140-residue protein sequence, read N- to C-terminus: MAPGRRVERVAALIRKETSELLMHGIRDDRVHQGLISITQVDVSGDLQHCKIFVSVLADPEGRAQVMEGLQAASSFLRGELGRRLQMRRAPEVVFHLDRGLEKGASVLGLLGDLERERQERGEIPPGSDDAQNCHDDEPS.

Positions 116-140 (RERQERGEIPPGSDDAQNCHDDEPS) are disordered.

It belongs to the RbfA family. In terms of assembly, monomer. Binds 30S ribosomal subunits, but not 50S ribosomal subunits or 70S ribosomes.

It is found in the cytoplasm. In terms of biological role, one of several proteins that assist in the late maturation steps of the functional core of the 30S ribosomal subunit. Associates with free 30S ribosomal subunits (but not with 30S subunits that are part of 70S ribosomes or polysomes). Required for efficient processing of 16S rRNA. May interact with the 5'-terminal helix region of 16S rRNA. The protein is Ribosome-binding factor A of Synechococcus sp. (strain WH7803).